Consider the following 167-residue polypeptide: Regulator of sigma D (167 aa).

The protein belongs to the Rsd/AlgQ family. As to quaternary structure, interacts with RpoD.

The protein localises to the cytoplasm. Functionally, binds RpoD and negatively regulates RpoD-mediated transcription activation by preventing the interaction between the primary sigma factor RpoD with the catalytic core of the RNA polymerase and with promoter DNA. May be involved in replacement of the RNA polymerase sigma subunit from RpoD to RpoS during the transition from exponential growth to the stationary phase. This chain is Regulator of sigma D, found in Yersinia enterocolitica serotype O:8 / biotype 1B (strain NCTC 13174 / 8081).